The primary structure comprises 405 residues: Eukaryotic initiation factor 4A (405 aa).

A Q motif motif is present at residues 31–59 (ECFEALNLEGDLLRGIFAYGFEKPSAIQQ). The Helicase ATP-binding domain occupies 62-232 (IKPILDGYDT…TQFMRDPKRI (171 aa)). 75-82 (AQSGTGKT) is a binding site for ATP. The short motif at 180–183 (DEAD) is the DEAD box element. Residues 243 to 404 (GIRQFYVGVE…EMPMGITDIL (162 aa)) enclose the Helicase C-terminal domain.

This sequence belongs to the DEAD box helicase family. eIF4A subfamily. In terms of assembly, eIF4F is a multi-subunit complex, the composition of which varies with external and internal environmental conditions. It is composed of at least EIF4A, EIF4E and EIF4G.

It catalyses the reaction ATP + H2O = ADP + phosphate + H(+). Functionally, ATP-dependent RNA helicase which is a subunit of the eIF4F complex involved in cap recognition and is required for mRNA binding to ribosome. In the current model of translation initiation, eIF4A unwinds RNA secondary structures in the 5'-UTR of mRNAs which is necessary to allow efficient binding of the small ribosomal subunit, and subsequent scanning for the initiator codon. The chain is Eukaryotic initiation factor 4A (EIF4-A) from Cryptosporidium parvum.